The following is an 89-amino-acid chain: UPF0367 protein PMM0124 (89 aa).

It belongs to the UPF0367 family.

This is UPF0367 protein PMM0124 from Prochlorococcus marinus subsp. pastoris (strain CCMP1986 / NIES-2087 / MED4).